We begin with the raw amino-acid sequence, 121 residues long: Aspartate 1-decarboxylase (121 aa).

Serine 25 functions as the Schiff-base intermediate with substrate; via pyruvic acid in the catalytic mechanism. Serine 25 carries the post-translational modification Pyruvic acid (Ser). Threonine 57 lines the substrate pocket. Catalysis depends on tyrosine 58, which acts as the Proton donor. 73-75 (GAA) contributes to the substrate binding site.

It belongs to the PanD family. In terms of assembly, heterooctamer of four alpha and four beta subunits. Pyruvate is required as a cofactor. Post-translationally, is synthesized initially as an inactive proenzyme, which is activated by self-cleavage at a specific serine bond to produce a beta-subunit with a hydroxyl group at its C-terminus and an alpha-subunit with a pyruvoyl group at its N-terminus.

It is found in the cytoplasm. The enzyme catalyses L-aspartate + H(+) = beta-alanine + CO2. It participates in cofactor biosynthesis; (R)-pantothenate biosynthesis; beta-alanine from L-aspartate: step 1/1. Its function is as follows. Catalyzes the pyruvoyl-dependent decarboxylation of aspartate to produce beta-alanine. The sequence is that of Aspartate 1-decarboxylase from Maricaulis maris (strain MCS10) (Caulobacter maris).